A 746-amino-acid chain; its full sequence is Polyribonucleotide nucleotidyltransferase (746 aa).

Mg(2+) contacts are provided by Asp-520 and Asp-526. One can recognise a KH domain in the interval 586–648; sequence PRIITVKVPV…EAARAAVNAI (63 aa). Residues 657–729 enclose the S1 motif domain; sequence GERYLGTVVK…PRGKLSLVPV (73 aa).

It belongs to the polyribonucleotide nucleotidyltransferase family. Requires Mg(2+) as cofactor.

Its subcellular location is the cytoplasm. It catalyses the reaction RNA(n+1) + phosphate = RNA(n) + a ribonucleoside 5'-diphosphate. Its function is as follows. Involved in mRNA degradation. Catalyzes the phosphorolysis of single-stranded polyribonucleotides processively in the 3'- to 5'-direction. This chain is Polyribonucleotide nucleotidyltransferase, found in Kineococcus radiotolerans (strain ATCC BAA-149 / DSM 14245 / SRS30216).